Consider the following 283-residue polypeptide: Polyamine aminopropyltransferase (283 aa).

A PABS domain is found at 5 to 241 (NNWYIEHFER…GWWSVTMARK (237 aa)). Glutamine 35 provides a ligand contact to S-methyl-5'-thioadenosine. Spermidine contacts are provided by histidine 66 and aspartate 90. Residues aspartate 110 and 141 to 142 (DG) contribute to the S-methyl-5'-thioadenosine site. The Proton acceptor role is filled by aspartate 160. Residue 160 to 163 (DSTD) participates in spermidine binding. Proline 167 contacts S-methyl-5'-thioadenosine.

This sequence belongs to the spermidine/spermine synthase family. In terms of assembly, homodimer or homotetramer.

It is found in the cytoplasm. It catalyses the reaction S-adenosyl 3-(methylsulfanyl)propylamine + putrescine = S-methyl-5'-thioadenosine + spermidine + H(+). Its pathway is amine and polyamine biosynthesis; spermidine biosynthesis; spermidine from putrescine: step 1/1. Its function is as follows. Catalyzes the irreversible transfer of a propylamine group from the amino donor S-adenosylmethioninamine (decarboxy-AdoMet) to putrescine (1,4-diaminobutane) to yield spermidine. The sequence is that of Polyamine aminopropyltransferase from Stenotrophomonas maltophilia (strain K279a).